The following is a 121-amino-acid chain: Large ribosomal subunit protein uL18 (121 aa).

The protein belongs to the universal ribosomal protein uL18 family. As to quaternary structure, part of the 50S ribosomal subunit; part of the 5S rRNA/L5/L18/L25 subcomplex. Contacts the 5S and 23S rRNAs.

Functionally, this is one of the proteins that bind and probably mediate the attachment of the 5S RNA into the large ribosomal subunit, where it forms part of the central protuberance. The protein is Large ribosomal subunit protein uL18 of Bdellovibrio bacteriovorus (strain ATCC 15356 / DSM 50701 / NCIMB 9529 / HD100).